The primary structure comprises 144 residues: MIKLESLQDPSPRKRRKKLLGRGPGSGHGKTSGRGHKGDGSRSGYKRRFGYEGGGVPLYRRVPTRGFSHARFDECVEEITTQRLNSLFNEGEEITLDALKQKKAIDKHAIRVKVIVKGELEKTFIWKDANVVLSQGVRNLIGVA.

A disordered region spans residues 1–52 (MIKLESLQDPSPRKRRKKLLGRGPGSGHGKTSGRGHKGDGSRSGYKRRFGYE). A compositionally biased stretch (gly residues) spans 22 to 32 (RGPGSGHGKTS).

The protein belongs to the universal ribosomal protein uL15 family. Part of the 50S ribosomal subunit.

In terms of biological role, binds to the 23S rRNA. The polypeptide is Large ribosomal subunit protein uL15 (Chlamydia felis (strain Fe/C-56) (Chlamydophila felis)).